An 86-amino-acid chain; its full sequence is UPF0297 protein LSL_1110 (86 aa).

The protein belongs to the UPF0297 family.

This Ligilactobacillus salivarius (strain UCC118) (Lactobacillus salivarius) protein is UPF0297 protein LSL_1110.